The sequence spans 339 residues: Ketol-acid reductoisomerase (NADP(+)) (339 aa).

Positions 1–182 (MRVYYDRDAD…GGGRSGVIET (182 aa)) constitute a KARI N-terminal Rossmann domain. NADP(+)-binding positions include 24-27 (YGSQ), arginine 48, serine 51, threonine 53, and 83-86 (DEHQ). Residue histidine 108 is part of the active site. Glycine 134 is an NADP(+) binding site. One can recognise a KARI C-terminal knotted domain in the interval 183 to 328 (TFKEECETDL…AELRAMMPWI (146 aa)). 4 residues coordinate Mg(2+): aspartate 191, glutamate 195, glutamate 227, and glutamate 231. Residue serine 252 participates in substrate binding.

Belongs to the ketol-acid reductoisomerase family. The cofactor is Mg(2+).

It carries out the reaction (2R)-2,3-dihydroxy-3-methylbutanoate + NADP(+) = (2S)-2-acetolactate + NADPH + H(+). It catalyses the reaction (2R,3R)-2,3-dihydroxy-3-methylpentanoate + NADP(+) = (S)-2-ethyl-2-hydroxy-3-oxobutanoate + NADPH + H(+). It functions in the pathway amino-acid biosynthesis; L-isoleucine biosynthesis; L-isoleucine from 2-oxobutanoate: step 2/4. Its pathway is amino-acid biosynthesis; L-valine biosynthesis; L-valine from pyruvate: step 2/4. Its function is as follows. Involved in the biosynthesis of branched-chain amino acids (BCAA). Catalyzes an alkyl-migration followed by a ketol-acid reduction of (S)-2-acetolactate (S2AL) to yield (R)-2,3-dihydroxy-isovalerate. In the isomerase reaction, S2AL is rearranged via a Mg-dependent methyl migration to produce 3-hydroxy-3-methyl-2-ketobutyrate (HMKB). In the reductase reaction, this 2-ketoacid undergoes a metal-dependent reduction by NADPH to yield (R)-2,3-dihydroxy-isovalerate. The protein is Ketol-acid reductoisomerase (NADP(+)) of Rhizorhabdus wittichii (strain DSM 6014 / CCUG 31198 / JCM 15750 / NBRC 105917 / EY 4224 / RW1) (Sphingomonas wittichii).